The chain runs to 264 residues: Myozenin-2 (264 aa).

Residue Arg53 is modified to Omega-N-methylarginine. The interval 90–135 (GRVDGSNLEGGSQQGPSTPPNTPDPRSPPNPENIAPGYSGPLKEIP) is disordered. The residue at position 101 (Ser101) is a Phosphoserine. Residues 106–120 (STPPNTPDPRSPPNP) show a composition bias toward pro residues. Phosphothreonine is present on residues Thr107 and Thr111. The residue at position 116 (Ser116) is a Phosphoserine.

Belongs to the myozenin family. Interacts via its C-terminus with spectrin repeats 3 and 4 of ACTN2. Interacts with ACTN1, LDB3, MYOT and PPP3CA. As to expression, expressed specifically in heart and skeletal muscle. In skeletal muscle, localized to the soleus and plantaris muscles, which are predominantly composed of slow-twitch fibers.

Its subcellular location is the cytoplasm. It is found in the myofibril. The protein resides in the sarcomere. It localises to the z line. Functionally, myozenins may serve as intracellular binding proteins involved in linking Z line proteins such as alpha-actinin, gamma-filamin, TCAP/telethonin, LDB3/ZASP and localizing calcineurin signaling to the sarcomere. Plays an important role in the modulation of calcineurin signaling. May play a role in myofibrillogenesis. This chain is Myozenin-2, found in Mus musculus (Mouse).